Here is a 234-residue protein sequence, read N- to C-terminus: Leucyl/phenylalanyl-tRNA--protein transferase (234 aa).

The protein belongs to the L/F-transferase family.

It is found in the cytoplasm. The catalysed reaction is N-terminal L-lysyl-[protein] + L-leucyl-tRNA(Leu) = N-terminal L-leucyl-L-lysyl-[protein] + tRNA(Leu) + H(+). It carries out the reaction N-terminal L-arginyl-[protein] + L-leucyl-tRNA(Leu) = N-terminal L-leucyl-L-arginyl-[protein] + tRNA(Leu) + H(+). The enzyme catalyses L-phenylalanyl-tRNA(Phe) + an N-terminal L-alpha-aminoacyl-[protein] = an N-terminal L-phenylalanyl-L-alpha-aminoacyl-[protein] + tRNA(Phe). In terms of biological role, functions in the N-end rule pathway of protein degradation where it conjugates Leu, Phe and, less efficiently, Met from aminoacyl-tRNAs to the N-termini of proteins containing an N-terminal arginine or lysine. This chain is Leucyl/phenylalanyl-tRNA--protein transferase, found in Citrobacter koseri (strain ATCC BAA-895 / CDC 4225-83 / SGSC4696).